The primary structure comprises 276 residues: Urease accessory protein UreD (276 aa).

It belongs to the UreD family. In terms of assembly, ureD, UreF and UreG form a complex that acts as a GTP-hydrolysis-dependent molecular chaperone, activating the urease apoprotein by helping to assemble the nickel containing metallocenter of UreC. The UreE protein probably delivers the nickel.

Its subcellular location is the cytoplasm. In terms of biological role, required for maturation of urease via the functional incorporation of the urease nickel metallocenter. The chain is Urease accessory protein UreD from Variovorax paradoxus (strain S110).